We begin with the raw amino-acid sequence, 152 residues long: Transcriptional regulator MraZ (152 aa).

SpoVT-AbrB domains follow at residues valine 5–glutamate 52 and alanine 81–glutamine 124.

It belongs to the MraZ family. Forms oligomers.

It localises to the cytoplasm. The protein localises to the nucleoid. The protein is Transcriptional regulator MraZ of Actinobacillus pleuropneumoniae serotype 5b (strain L20).